Here is a 180-residue protein sequence, read N- to C-terminus: CD-NTase/cGAS isopeptidase (180 aa).

The MPN domain maps to 33–165 (IVISSSTIEQ…AGSYSLSASV (133 aa)). E54 functions as the Proton donor/acceptor in the catalytic mechanism. H115, H117, and D128 together coordinate Zn(2+).

It belongs to the peptidase M67B family. Cap3 isopeptidase subfamily.

Its function is as follows. Metalloprotease priming reversal component of a CBASS antivirus system. CBASS (cyclic oligonucleotide-based antiphage signaling system) provides immunity against bacteriophages. The CD-NTase protein (CdnD) synthesizes cyclic nucleotides in response to infection; these serve as specific second messenger signals. The signals activate a diverse range of effectors, leading to bacterial cell death and thus abortive phage infection. A type II-C(AAG) CBASS system. Functionally, reverses the primed state of DncV, the CD-NTase. Cleaves a CdnD-GFP (green fluorescent protein) fusion protein precisely at the C-terminus of CdnD. Overexpression decreases the efficacy of CBASS protection against phage T2. Antagonism of phage defense upon overexpression is CBASS-system specific, Cap3 from this bacteria only antagonizes its cognate CBASS system and not that of C.freundii, E.coli or V.cholerae. In terms of biological role, protects E.coli against phage T2 infection. When the cdnD-cap2-cap3-cap4 operon is introduced in E.coli there is a more than 10(3) decrease in the efficiency of T2 plaque formation. The operon does not protect against phage T5 and only about 10-fold against T7. The sequence is that of CD-NTase/cGAS isopeptidase from Enterobacter hormaechei subsp. hoffmannii (strain UCI 50).